The sequence spans 202 residues: uncharacterized protein (202 aa).

The chain crosses the membrane as a helical span at residues 18–38 (FLIFLIFLSVLGCGITISGCI).

Its subcellular location is the membrane. This is an uncharacterized protein from Methanocaldococcus jannaschii (strain ATCC 43067 / DSM 2661 / JAL-1 / JCM 10045 / NBRC 100440) (Methanococcus jannaschii).